The following is a 673-amino-acid chain: MSVPAEVVEKARKLREEIEFHNVRYYRLDDPLITDAEYDRLMAELLAIEARYPELVTPDSPTQRVGAPPVEAFTEVRHEVPMLSLENAFSEEDLTAFDRRVRKELSRDTLEYVAEPKLDGLAVNLLYQDGVLVRAATRGDGEVGEDVTHNVRAVRAIPLRLKGEDFPDRFEARGEVFMPKRGFLALNERARRSGEKTFVNPRNAAAGSLRQLDARVTASRPLSFYAYGIGAFPDARLPATQHELLESLQRWGLPVSPEYRVVRGAAGCLEYYRSLGERRHDLPYDIDGVVYKVDDLKAQAGLGFVSRAPRWAIAHKFPAEEARTRVVGIDVQVGRTGVLTPVARLEPVFVGGVTVTNATLHNADEIRRKDVRPGDTVIVRRAGDVIPEIVRVVPELRKPGAEPFRMPEVCPECGSAVEAEPGEVLARCSGGLYCPAQHKESIKHFASRRAMDIEGLGDKLVDQLVGRKLIATVADLYRLDLDRLAGLDRMGEKSAANLLAALERSKRTTLARFLYALGIRDVGEVTAKVLSEHFGSLEALMEATEEELLAVADVGPVVSRHIRLFFAQPHNREVISQLLACGVSWEKPAPAPRKLPLQGLVFVLTGTLASMSRDEARARLEALGAKCTGSVSRNTSFVVAGSEPGSKLDKASELGVPVLDEKGFLDLLERGRP.

NAD(+) contacts are provided by residues 35–39 (DAEYD), 84–85 (SL), and E115. The active-site N6-AMP-lysine intermediate is K117. NAD(+) contacts are provided by R138, E175, K292, and K316. Zn(2+)-binding residues include C410, C413, C428, and C434. The 82-residue stretch at 592-673 (PRKLPLQGLV…FLDLLERGRP (82 aa)) folds into the BRCT domain.

The protein belongs to the NAD-dependent DNA ligase family. LigA subfamily. It depends on Mg(2+) as a cofactor. The cofactor is Mn(2+).

The catalysed reaction is NAD(+) + (deoxyribonucleotide)n-3'-hydroxyl + 5'-phospho-(deoxyribonucleotide)m = (deoxyribonucleotide)n+m + AMP + beta-nicotinamide D-nucleotide.. DNA ligase that catalyzes the formation of phosphodiester linkages between 5'-phosphoryl and 3'-hydroxyl groups in double-stranded DNA using NAD as a coenzyme and as the energy source for the reaction. It is essential for DNA replication and repair of damaged DNA. The chain is DNA ligase from Methylococcus capsulatus (strain ATCC 33009 / NCIMB 11132 / Bath).